The following is a 551-amino-acid chain: MPSARLQQQFIRLWQCCEGKSQDTTLNELAALLSCSRRHMRTLLNTMQDRGWLTWEAEVGRGKRSRLTFLYTGLALQQQRAEDLLEQDRIDQLVQLVGDKATVRQMLVSHLGRSFRQGRHILRVLYYRPLRNLLPGSALRRSETHIARQIFSSLTRINEENGELEADIAHHWQQISPLHWRFFLRPGVHFHHGRELEMDDVIASLKRINTLPLYSHITDIVSPTPWTLDIHLTQPDRWLPLLLGQVPAMILPCEWETLSNFASHPIGTGPYAVIRNSTNQLKIQAFDDFFGYRALIDEVNVWVLPEIADEPAGGLMLKGPQGEKKEIESRLEEGCYYLLFDSRTHRGANQQVRDWVSYVLSPTNLVYFAEEQYQQLWFPAYGLLPRWHHARTIKSEKPAGLESLTLTFYQDHSEHRVIAGIMQQILASHQVTLEIKEISYDQWHEGEIESDIWLNSANFTLPLDFSLFAHLCEVPLLQHCIPIDWQADAARWRNGEMNLANWCQQLVASKAMVPLIHHWLIIQGQRSMRGLRMNTLGWFDFKSAWFAPPDP.

Residues 1-116 (MPSARLQQQF…LVSHLGRSFR (116 aa)) form the HTH marR-type domain. Residues 26–49 (LNELAALLSCSRRHMRTLLNTMQD) constitute a DNA-binding region (H-T-H motif). The solute-binding stretch occupies residues 163–492 (ELEADIAHHW…IDWQADAARW (330 aa)).

In terms of biological role, activates the small RNA gene sgrS under glucose-phosphate stress conditions as well as yfdZ. Represses its own transcription under both stress and non-stress conditions. Might act as a sensor of the intracellular accumulation of phosphoglucose by binding these molecules in its C-terminal solute-binding domain. This is HTH-type transcriptional regulator SgrR from Shigella flexneri serotype 5b (strain 8401).